Here is a 262-residue protein sequence, read N- to C-terminus: Methanethiol S-methyltransferase (262 aa).

The next 5 helical transmembrane spans lie at 22 to 42, 55 to 75, 100 to 120, 134 to 154, and 195 to 215; these read LYSL…IGFV, PGAS…LFAV, ATYV…WQPI, AVLT…TFLI, and GFLM…VFAL.

This sequence belongs to the nurim family.

Its subcellular location is the membrane. It catalyses the reaction methanethiol + S-adenosyl-L-methionine = dimethyl sulfide + S-adenosyl-L-homocysteine + H(+). Catalyzes the methylation of methanethiol (MeSH) to yield dimethylsulphide (DMS). This chain is Methanethiol S-methyltransferase, found in Pseudomonas deceptionensis.